The sequence spans 623 residues: Low affinity potassium transport system protein Kup (623 aa).

Helical transmembrane passes span 9–29, 49–69, 101–121, 137–157, 163–183, 212–232, 247–267, 276–296, 337–357, 363–383, 395–415, and 419–439; these read LPAI…TSPL, VFGF…FKYL, VLVI…VITP, PSLD…LFMI, GMVG…LAVL, AVSF…EALY, WFSV…ALLL, PFFL…ATLA, IYIP…IVSF, LAAA…ILFA, ILVG…FSAN, and LFSG…IMTT.

The protein belongs to the HAK/KUP transporter (TC 2.A.72) family.

The protein resides in the cell inner membrane. The enzyme catalyses K(+)(in) + H(+)(in) = K(+)(out) + H(+)(out). Functionally, responsible for the low-affinity transport of potassium into the cell. Likely operates as a K(+):H(+) symporter. The protein is Low affinity potassium transport system protein Kup of Cronobacter sakazakii (strain ATCC BAA-894) (Enterobacter sakazakii).